We begin with the raw amino-acid sequence, 179 residues long: Ribosome maturation factor RimM (179 aa).

The PRC barrel domain maps to 95-174 (KDEFFYFDIL…QIFCTQDAFL (80 aa)).

It belongs to the RimM family. In terms of assembly, binds ribosomal protein uS19.

Its subcellular location is the cytoplasm. In terms of biological role, an accessory protein needed during the final step in the assembly of 30S ribosomal subunit, possibly for assembly of the head region. Essential for efficient processing of 16S rRNA. May be needed both before and after RbfA during the maturation of 16S rRNA. It has affinity for free ribosomal 30S subunits but not for 70S ribosomes. The protein is Ribosome maturation factor RimM of Campylobacter jejuni subsp. doylei (strain ATCC BAA-1458 / RM4099 / 269.97).